A 645-amino-acid polypeptide reads, in one-letter code: DNA ligase (645 aa).

Residues 30 to 34 and 72 to 73 each bind NAD(+); these read DAEFD and SQ. Lys-99 serves as the catalytic N6-AMP-lysine intermediate. NAD(+) contacts are provided by Arg-120, Glu-163, Lys-275, and Lys-296. Residues Cys-387, Cys-390, Cys-403, and Cys-408 each coordinate Zn(2+). The BRCT domain occupies 564–645; sequence EEGAVLKGLS…EAFLNLIGKV (82 aa).

It belongs to the NAD-dependent DNA ligase family. LigA subfamily. Mg(2+) is required as a cofactor. The cofactor is Mn(2+).

The enzyme catalyses NAD(+) + (deoxyribonucleotide)n-3'-hydroxyl + 5'-phospho-(deoxyribonucleotide)m = (deoxyribonucleotide)n+m + AMP + beta-nicotinamide D-nucleotide.. In terms of biological role, DNA ligase that catalyzes the formation of phosphodiester linkages between 5'-phosphoryl and 3'-hydroxyl groups in double-stranded DNA using NAD as a coenzyme and as the energy source for the reaction. It is essential for DNA replication and repair of damaged DNA. The sequence is that of DNA ligase from Treponema denticola (strain ATCC 35405 / DSM 14222 / CIP 103919 / JCM 8153 / KCTC 15104).